The chain runs to 87 residues: Antitoxin epsilon (87 aa).

The protein belongs to the epsilon antitoxin family. In terms of assembly, in the presence of the zeta toxin, forms an inactive PezA(2)PezT(2) heterotetramer.

Functionally, antitoxin component of a type II toxin-antitoxin (TA) system. Neutralizes the toxic effect of cognate zeta toxin. Part of a postsegregational killing (PSK) system involved in the killing of plasmid-free cells. Continuous synthesis of the epsilon antitoxin is required to counteract the zeta toxin. The polypeptide is Antitoxin epsilon (Lactococcus lactis subsp. lactis (Streptococcus lactis)).